A 651-amino-acid polypeptide reads, in one-letter code: MSGVRAVRISIESACEKQVHEVGLDGTETYLPPLSMSQNLARLAQRIDFSQGSGSEEEEAAGTEGDAQEWPGAGSSADQDDEEGVVKFQPSLWPWDSVRNNLRSALTEMCVLYDVLSIVRDKKFMTLDPVSQDALPPKQNPQTLQLISKKKSLAGAAQILLKGAERLTKSVTENQENKLQRDFNSELLRLRQHWKLRKVGDKILGDLSYRSAGSLFPHHGTFEVIKNTDLDLDKKIPEDYCPLDVQIPSDLEGSAYIKVSIQKQAPDIGDLGTVNLFKRPLPKSKPGSPHWQTKLEAAQNVLLCKEIFAQLSREAVQIKSQVPHIVVKNQIISQPFPSLQLSISLCHSSNDKKSQKFATEKQCPEDHLYVLEHNLHLLIREFHKQTLSSIMMPHPASAPFGHKRMRLSGPQAFDKNEINSLQSSEGLLEKIIKQAKHIFLRSRAAATIDSLASRIEDPQIQAHWSNINDVYESSVKVLITSQGYEQICKSIQLQLNIGVEQIRVVHRDGRVITLSYQEQELQDFLLSQMSQHQVHAVQQLAKVMGWQVLSFSNHVGLGPIESIGNASAITVASPSGDYAISVRNGPESGSKIMVQFPRNQCKDLPKSDVLQDNKWSHLRGPFKEVQWNKMEGRNFVYKMELLMSALSPCLL.

The segment at 51-83 (QGSGSEEEEAAGTEGDAQEWPGAGSSADQDDEE) is disordered.

This sequence belongs to the Mediator complex subunit 17 family. Interacts with GATA1 and PPARG. Component of the Mediator complex, which is composed of MED1, MED4, MED6, MED7, MED8, MED9, MED10, MED11, MED12, MED13, MED13L, MED14, MED15, MED16, MED17, MED18, MED19, MED20, MED21, MED22, MED23, MED24, MED25, MED26, MED27, MED29, MED30, MED31, CCNC, CDK8 and CDC2L6/CDK11. The MED12, MED13, CCNC and CDK8 subunits form a distinct module termed the CDK8 module. Mediator containing the CDK8 module is less active than Mediator lacking this module in supporting transcriptional activation. Individual preparations of the Mediator complex lacking one or more distinct subunits have been variously termed ARC, CRSP, DRIP, PC2, SMCC and TRAP. Interacts with STAT2. In terms of tissue distribution, ubiquitous.

The protein resides in the nucleus. Component of the Mediator complex, a coactivator involved in the regulated transcription of nearly all RNA polymerase II-dependent genes. Mediator functions as a bridge to convey information from gene-specific regulatory proteins to the basal RNA polymerase II transcription machinery. Mediator is recruited to promoters by direct interactions with regulatory proteins and serves as a scaffold for the assembly of a functional preinitiation complex with RNA polymerase II and the general transcription factors. This chain is Mediator of RNA polymerase II transcription subunit 17 (MED17), found in Homo sapiens (Human).